We begin with the raw amino-acid sequence, 190 residues long: dTTP/UTP pyrophosphatase (190 aa).

Asp68 (proton acceptor) is an active-site residue.

It belongs to the Maf family. YhdE subfamily. A divalent metal cation is required as a cofactor.

It is found in the cytoplasm. It carries out the reaction dTTP + H2O = dTMP + diphosphate + H(+). The enzyme catalyses UTP + H2O = UMP + diphosphate + H(+). Its function is as follows. Nucleoside triphosphate pyrophosphatase that hydrolyzes dTTP and UTP. May have a dual role in cell division arrest and in preventing the incorporation of modified nucleotides into cellular nucleic acids. In Acholeplasma laidlawii (strain PG-8A), this protein is dTTP/UTP pyrophosphatase.